Consider the following 482-residue polypeptide: tRNA sulfurtransferase (482 aa).

Positions 61–165 constitute a THUMP domain; that stretch reads EQAIEALACI…GEELFIVSAI (105 aa). Residues 183–184, Lys265, Gly287, and Gln296 each bind ATP; that span reads LI. Cys344 and Cys456 are disulfide-bonded. In terms of domain architecture, Rhodanese spans 404–482; that stretch reads SGDNEVILDI…GFANVKVYRP (79 aa). Cys456 (cysteine persulfide intermediate) is an active-site residue.

It belongs to the ThiI family.

The protein localises to the cytoplasm. The catalysed reaction is [ThiI sulfur-carrier protein]-S-sulfanyl-L-cysteine + a uridine in tRNA + 2 reduced [2Fe-2S]-[ferredoxin] + ATP + H(+) = [ThiI sulfur-carrier protein]-L-cysteine + a 4-thiouridine in tRNA + 2 oxidized [2Fe-2S]-[ferredoxin] + AMP + diphosphate. It catalyses the reaction [ThiS sulfur-carrier protein]-C-terminal Gly-Gly-AMP + S-sulfanyl-L-cysteinyl-[cysteine desulfurase] + AH2 = [ThiS sulfur-carrier protein]-C-terminal-Gly-aminoethanethioate + L-cysteinyl-[cysteine desulfurase] + A + AMP + 2 H(+). It functions in the pathway cofactor biosynthesis; thiamine diphosphate biosynthesis. Catalyzes the ATP-dependent transfer of a sulfur to tRNA to produce 4-thiouridine in position 8 of tRNAs, which functions as a near-UV photosensor. Also catalyzes the transfer of sulfur to the sulfur carrier protein ThiS, forming ThiS-thiocarboxylate. This is a step in the synthesis of thiazole, in the thiamine biosynthesis pathway. The sulfur is donated as persulfide by IscS. In Aeromonas hydrophila subsp. hydrophila (strain ATCC 7966 / DSM 30187 / BCRC 13018 / CCUG 14551 / JCM 1027 / KCTC 2358 / NCIMB 9240 / NCTC 8049), this protein is tRNA sulfurtransferase.